A 967-amino-acid chain; its full sequence is Importin-alpha re-exporter (967 aa).

In terms of domain architecture, Importin N-terminal spans 20 to 95 (AEEALKVWEL…KREIINLMLK (76 aa)).

This sequence belongs to the XPO2/CSE1 family. In terms of assembly, binds with high affinity to importin-alpha only in the presence of RanGTP.

Its subcellular location is the cytoplasm. It is found in the nucleus envelope. Functionally, export receptor for importin alpha. Mediates importin-alpha re-export from the nucleus to the cytoplasm after import substrates have been released into the nucleoplasm. This is Importin-alpha re-exporter (kap109) from Schizosaccharomyces pombe (strain 972 / ATCC 24843) (Fission yeast).